A 119-amino-acid chain; its full sequence is Large ribosomal subunit protein bL20c (119 aa).

This sequence belongs to the bacterial ribosomal protein bL20 family.

The protein localises to the plastid. It localises to the chloroplast. In terms of biological role, binds directly to 23S ribosomal RNA and is necessary for the in vitro assembly process of the 50S ribosomal subunit. It is not involved in the protein synthesizing functions of that subunit. In Amborella trichopoda, this protein is Large ribosomal subunit protein bL20c.